A 351-amino-acid polypeptide reads, in one-letter code: Protein-glutamate methylesterase/protein-glutamine glutaminase 2 (351 aa).

The 118-residue stretch at Lys-4–Leu-121 folds into the Response regulatory domain. Residue Asp-55 is modified to 4-aspartylphosphate. Residues Arg-156 to Val-348 form the CheB-type methylesterase domain. Catalysis depends on residues Ser-168, His-194, and Asp-290.

This sequence belongs to the CheB family. In terms of processing, phosphorylated by CheA. Phosphorylation of the N-terminal regulatory domain activates the methylesterase activity.

The protein resides in the cytoplasm. The enzyme catalyses [protein]-L-glutamate 5-O-methyl ester + H2O = L-glutamyl-[protein] + methanol + H(+). It catalyses the reaction L-glutaminyl-[protein] + H2O = L-glutamyl-[protein] + NH4(+). Involved in chemotaxis. Part of a chemotaxis signal transduction system that modulates chemotaxis in response to various stimuli. Catalyzes the demethylation of specific methylglutamate residues introduced into the chemoreceptors (methyl-accepting chemotaxis proteins or MCP) by CheR. Also mediates the irreversible deamidation of specific glutamine residues to glutamic acid. This is Protein-glutamate methylesterase/protein-glutamine glutaminase 2 from Shewanella oneidensis (strain ATCC 700550 / JCM 31522 / CIP 106686 / LMG 19005 / NCIMB 14063 / MR-1).